The primary structure comprises 121 residues: Large ribosomal subunit protein uL18 (121 aa).

Residues 1-19 (MASKKVQKIRDKRKARVRA) show a composition bias toward basic residues. The interval 1 to 23 (MASKKVQKIRDKRKARVRAKISG) is disordered.

It belongs to the universal ribosomal protein uL18 family. In terms of assembly, part of the 50S ribosomal subunit; part of the 5S rRNA/L5/L18/L25 subcomplex. Contacts the 5S and 23S rRNAs.

Its function is as follows. This is one of the proteins that bind and probably mediate the attachment of the 5S RNA into the large ribosomal subunit, where it forms part of the central protuberance. The protein is Large ribosomal subunit protein uL18 of Syntrophus aciditrophicus (strain SB).